The following is a 273-amino-acid chain: MMKTLSSLLLLFSVSLQAAPIERVISLAPHATEIAYAAGLGDKLIAVSEMSDYPEAAKKLEKVSNYKGINLEKIITLKPDLIIAWPAGNPAKELEKLEQFGFKIYYSQTKSLKDIGDNIEQLSQYSDDPQIGLNNARDYRTHLEALRAKYQNLPKTRYFYQLSDTPIITVAGQNWPTEVFRFCGGENVFDGASAPYPQVSIEQVILKRPQAMFVSPHAIQNNGMWSPWVEEIPALKNAHFWQLDADWLNRPTPRTLLAIEQVCEHFASIEQKR.

The first 18 residues, 1 to 18 (MMKTLSSLLLLFSVSLQA), serve as a signal peptide directing secretion. Positions 23–273 (RVISLAPHAT…EHFASIEQKR (251 aa)) constitute a Fe/B12 periplasmic-binding domain. The cysteines at positions 183 and 263 are disulfide-linked.

This sequence belongs to the BtuF family. In terms of assembly, the complex is composed of two ATP-binding proteins (BtuD), two transmembrane proteins (BtuC) and a solute-binding protein (BtuF).

Its subcellular location is the periplasm. Its function is as follows. Part of the ABC transporter complex BtuCDF involved in vitamin B12 import. Binds vitamin B12 and delivers it to the periplasmic surface of BtuC. This chain is Vitamin B12-binding protein, found in Vibrio vulnificus (strain CMCP6).